The primary structure comprises 420 residues: D-tagatose-1,6-bisphosphate aldolase subunit GatZ (420 aa).

The protein belongs to the GatZ/KbaZ family. GatZ subfamily. As to quaternary structure, forms a complex with GatY.

Its pathway is carbohydrate metabolism; D-tagatose 6-phosphate degradation; D-glyceraldehyde 3-phosphate and glycerone phosphate from D-tagatose 6-phosphate: step 2/2. Component of the tagatose-1,6-bisphosphate aldolase GatYZ that is required for full activity and stability of the Y subunit. Could have a chaperone-like function for the proper and stable folding of GatY. When expressed alone, GatZ does not show any aldolase activity. Is involved in the catabolism of galactitol. The protein is D-tagatose-1,6-bisphosphate aldolase subunit GatZ of Escherichia coli O6:H1 (strain CFT073 / ATCC 700928 / UPEC).